The chain runs to 84 residues: Kappa-scoloptoxin(11)-Ssm3a (84 aa).

The first 16 residues, 1-16, serve as a signal peptide directing secretion; that stretch reads MSWMFYSFIVFTLAIK.

The protein belongs to the scoloptoxin-11 family. In terms of processing, contains 2 disulfide bonds. As to expression, expressed by the venom gland.

The protein resides in the secreted. In terms of biological role, inhibits voltage-gated potassium channel currents in DRG neurons. 200 nM of the toxin inhibits current amplitude by only 25% and even at concentrations up to 5 uM, the toxin does not inhibit all potassium currents. In vivo, insects injected with this toxin showed signs of neurotoxicity including twitching, paralysis, and body contraction. This chain is Kappa-scoloptoxin(11)-Ssm3a, found in Scolopendra mutilans (Chinese red-headed centipede).